The chain runs to 199 residues: Insertion sequence IS21-like putative ATP-binding protein (199 aa).

Position 114-121 (114-121) interacts with ATP; it reads GDSGTGKT.

This sequence belongs to the IS21/IS1162 putative ATP-binding protein family.

The sequence is that of Insertion sequence IS21-like putative ATP-binding protein (tnpB) from Bacteroides fragilis (strain YCH46).